We begin with the raw amino-acid sequence, 266 residues long: Ribosomal RNA small subunit methyltransferase A (266 aa).

S-adenosyl-L-methionine-binding residues include Asn12, Leu14, Gly39, Glu61, Asp87, and Asn107.

The protein belongs to the class I-like SAM-binding methyltransferase superfamily. rRNA adenine N(6)-methyltransferase family. RsmA subfamily.

It localises to the cytoplasm. The enzyme catalyses adenosine(1518)/adenosine(1519) in 16S rRNA + 4 S-adenosyl-L-methionine = N(6)-dimethyladenosine(1518)/N(6)-dimethyladenosine(1519) in 16S rRNA + 4 S-adenosyl-L-homocysteine + 4 H(+). Its function is as follows. Specifically dimethylates two adjacent adenosines (A1518 and A1519) in the loop of a conserved hairpin near the 3'-end of 16S rRNA in the 30S particle. May play a critical role in biogenesis of 30S subunits. In Nitratidesulfovibrio vulgaris (strain ATCC 29579 / DSM 644 / CCUG 34227 / NCIMB 8303 / VKM B-1760 / Hildenborough) (Desulfovibrio vulgaris), this protein is Ribosomal RNA small subunit methyltransferase A.